The following is a 730-amino-acid chain: MMRHDRNVTEIDAETRPDENLWHSGDSAVGAPPAATPAAMTDLPEDRYLNRELSWLDFNARVLALADDNSLPLLERAKFLAIFASNLDEFYMVRVAGLKRRDEMGLSVRSADGLTPRKQLALIGEHTQRIATRHARVFLDSVRPALAEEGIHIVTWADLDQAERDELSTYFTEQVFPVLTPLAVDPAHPFPFVSGLSLNLAVMVRQTEDGGQHFARVKVPNNVDRFVELAAPRAGAEGENRGVVRFLPMEELIAAFLPLLFPGMEIVEHHAFRITRNADMEVEEDRDEDLLQALERELARRRFGPPVRLEIADDMTEGMLELLLRELDVHPGDVIEVPGLLDLSSLWQIYDLDRPALKDPAFVPDTHPAFADRESPKSIFATLREGDVLVHHPYDSFSTSVQRFIQQAAADPNVLAIKQTLYRTSGDSPIVRALIEAAEAGKQAVALVEIKARFDEQANIRWARALEQAGVHVVYGLVGLKTHCKTCLVVRREGSAIRRYCHIGTGNYNSKTARLYEDVGLLTAAPDIGADLTDLFNSLTGYSRKVSYRNLLVAPHGIRTGIIERVEREIAAHRERGQGRIRLKMNALVDEQVINSLYRASQAGVRVEVVVRGICALRPGVQGYSENIFVRSILGRFLEHSRIIHFRNINEFWIGSADMMHRNLDRRVEVLAQVKDPKLTAQLDELFESALDPSTRCWELGPDGQWTPSPQEGHTVRDHQVSLMERHRSP.

Over residues 1–21 (MMRHDRNVTEIDAETRPDENL) the composition is skewed to basic and acidic residues. The disordered stretch occupies residues 1–39 (MMRHDRNVTEIDAETRPDENLWHSGDSAVGAPPAATPAA). N86 provides a ligand contact to ATP. Mg(2+)-binding residues include R423 and R453. The active-site Phosphohistidine intermediate is H483. ATP contacts are provided by Y516, R612, and H640.

Belongs to the polyphosphate kinase 1 (PPK1) family. Requires Mg(2+) as cofactor. An intermediate of this reaction is the autophosphorylated ppk in which a phosphate is covalently linked to a histidine residue through a N-P bond.

It carries out the reaction [phosphate](n) + ATP = [phosphate](n+1) + ADP. In terms of biological role, catalyzes the reversible transfer of the terminal phosphate of ATP to form a long-chain polyphosphate (polyP). The sequence is that of Polyphosphate kinase from Mycolicibacterium paratuberculosis (strain ATCC BAA-968 / K-10) (Mycobacterium paratuberculosis).